Consider the following 214-residue polypeptide: Adenylate kinase (214 aa).

Gly10–Thr15 provides a ligand contact to ATP. The tract at residues Ser30 to Val59 is NMP. AMP is bound by residues Thr31, Arg36, Asn57–Val59, Gly83–Arg86, and Gln90. Positions Leu124 to Asp161 are LID. Arg125 is an ATP binding site. Residues Cys128 and Cys131 each coordinate Zn(2+). Ile134–Phe135 provides a ligand contact to ATP. Zn(2+) contacts are provided by Cys147 and Cys150. AMP is bound by residues Arg158 and Arg169. Lys197 contributes to the ATP binding site.

Belongs to the adenylate kinase family. Monomer.

The protein resides in the cytoplasm. The enzyme catalyses AMP + ATP = 2 ADP. It participates in purine metabolism; AMP biosynthesis via salvage pathway; AMP from ADP: step 1/1. In terms of biological role, catalyzes the reversible transfer of the terminal phosphate group between ATP and AMP. Plays an important role in cellular energy homeostasis and in adenine nucleotide metabolism. The protein is Adenylate kinase of Elusimicrobium minutum (strain Pei191).